Reading from the N-terminus, the 318-residue chain is Thymidylate synthase (318 aa).

DUMP-binding positions include R25 and 180-181; that span reads RR. The Nucleophile role is filled by C200. DUMP contacts are provided by residues 220 to 223, N231, and 261 to 263; these read RSGD and HIY. D223 contacts (6R)-5,10-methylene-5,6,7,8-tetrahydrofolate. A317 provides a ligand contact to (6R)-5,10-methylene-5,6,7,8-tetrahydrofolate.

The protein belongs to the thymidylate synthase family. Bacterial-type ThyA subfamily. In terms of assembly, homodimer.

The protein localises to the cytoplasm. The catalysed reaction is dUMP + (6R)-5,10-methylene-5,6,7,8-tetrahydrofolate = 7,8-dihydrofolate + dTMP. It participates in pyrimidine metabolism; dTTP biosynthesis. In terms of biological role, catalyzes the reductive methylation of 2'-deoxyuridine-5'-monophosphate (dUMP) to 2'-deoxythymidine-5'-monophosphate (dTMP) while utilizing 5,10-methylenetetrahydrofolate (mTHF) as the methyl donor and reductant in the reaction, yielding dihydrofolate (DHF) as a by-product. This enzymatic reaction provides an intracellular de novo source of dTMP, an essential precursor for DNA biosynthesis. In Lactobacillus delbrueckii subsp. bulgaricus (strain ATCC BAA-365 / Lb-18), this protein is Thymidylate synthase.